Here is a 154-residue protein sequence, read N- to C-terminus: Nuclear cap-binding protein subunit 2 (154 aa).

The interval 1 to 23 is disordered; that stretch reads MSTSVDLSSYRDQHFKGSRSEQE. A compositionally biased stretch (basic and acidic residues) spans 9–23; sequence SYRDQHFKGSRSEQE. Residues Tyr10, Tyr33, 102-106, 113-117, and 123-124 contribute to the mRNA site; these read RVDWD, RQYGR, and QV. The region spanning 30–108 is the RRM domain; it reads TTLYVGNLSF…RLIRVDWDAG (79 aa).

It belongs to the RRM NCBP2 family. In terms of assembly, component of the nuclear cap-binding complex (CBC), a heterodimer composed of Cbp80 and Cbp20 that interacts with m7GpppG-capped RNA. Interacts with Ars2.

The protein resides in the nucleus. Functionally, component of the cap-binding complex (CBC), which binds co-transcriptionally to the 5' cap of pre-mRNAs and is involved in various processes such as pre-mRNA splicing and RNA-mediated gene silencing (RNAi). The CBC complex is involved in miRNA-mediated RNA interference via its interaction with Ars2 and is required for primary microRNAs (miRNAs) processing. Also involved in innate immunity via the short interfering RNAs (siRNAs) processing machinery by restricting the viral RNA production. In the CBC complex, Cbp20 recognizes and binds capped RNAs (m7GpppG-capped RNA) but requires Cbp80 to stabilize the movement of its N-terminal loop and lock the CBC into a high affinity cap-binding state with the cap structure. In Drosophila ananassae (Fruit fly), this protein is Nuclear cap-binding protein subunit 2 (Cbp20).